A 357-amino-acid chain; its full sequence is Histidinol-phosphate aminotransferase 1 (357 aa).

Position 217 is an N6-(pyridoxal phosphate)lysine (Lys-217).

It belongs to the class-II pyridoxal-phosphate-dependent aminotransferase family. Histidinol-phosphate aminotransferase subfamily. Homodimer. Requires pyridoxal 5'-phosphate as cofactor.

It carries out the reaction L-histidinol phosphate + 2-oxoglutarate = 3-(imidazol-4-yl)-2-oxopropyl phosphate + L-glutamate. It functions in the pathway amino-acid biosynthesis; L-histidine biosynthesis; L-histidine from 5-phospho-alpha-D-ribose 1-diphosphate: step 7/9. The polypeptide is Histidinol-phosphate aminotransferase 1 (Burkholderia lata (strain ATCC 17760 / DSM 23089 / LMG 22485 / NCIMB 9086 / R18194 / 383)).